Reading from the N-terminus, the 358-residue chain is Trace amine-associated receptor 7f (358 aa).

Residues 1–47 (MSIADETVSWNQDSILSRDLFSATSAELCYENLNRSCVRSPYSPGPR) lie on the Extracellular side of the membrane. N34 is a glycosylation site (N-linked (GlcNAc...) asparagine). Intrachain disulfides connect C37–C201 and C120–C205. The chain crosses the membrane as a helical span at residues 48–68 (LILYAVFGFGAVLAVCGNLLV). Residues 69–83 (MTSILHFRQLHSPAN) lie on the Cytoplasmic side of the membrane. Residues 84-104 (FLVASLACADFLVGVMVMPFS) form a helical membrane-spanning segment. At 105–121 (MVRSVEGCWYFGDSYCK) the chain is on the extracellular side. The chain crosses the membrane as a helical span at residues 122–143 (LHTCFDVSFCYCSLFHLCFISV). Residues 144 to 166 (DRYIAVSDPLAYPTRFTASVSGK) lie on the Cytoplasmic side of the membrane. A helical membrane pass occupies residues 167–187 (CITFSWLLSISYGFSLIYTGA). Residues 188 to 212 (SEAGLEDLVSSLTCVGGCQIAVNQT) lie on the Extracellular side of the membrane. N210 is a glycosylation site (N-linked (GlcNAc...) asparagine). A helical transmembrane segment spans residues 213–233 (WVFINFSVFLIPTLVMITVYS). Residues 234 to 274 (KIFLIAKQQAQNIEKMSKQTARASDSYKDRVAKRERKAAKT) are Cytoplasmic-facing. Residues 275-295 (LGIAVAAFLLSWLPYFIDSFI) traverse the membrane as a helical segment. The Extracellular segment spans residues 296-309 (DAFLGFITPTYVYE). The helical transmembrane segment at 310–333 (ILVWIVYYNSAMNPLIYAFFYPWF) threads the bilayer. Residues 334–358 (RKAIKLTVTGKILRENSSTTNLFSE) are Cytoplasmic-facing.

It belongs to the G-protein coupled receptor 1 family. As to expression, specifically expressed in neurons of the olfactory epithelium.

The protein localises to the cell membrane. Functionally, olfactory receptor activated by trace amines, such as N-methylpiperidine and N,N-dimethylcyclohexylamine. Trace amine compounds are enriched in animal body fluids and act on trace amine-associated receptors (TAARs) to elicit both intraspecific and interspecific innate behaviors. Ligand-binding causes a conformation change that triggers signaling via G(s)-class of G alpha proteins (GNAL or GNAS). The protein is Trace amine-associated receptor 7f of Mus musculus (Mouse).